The primary structure comprises 89 residues: MNDYHYVYIVECSDESLYTGYTTDVERRVREHNAGEGAKYTRGRTPVQLVHFECFDTRSAALSREHEIKSYTREKKQQLAEEGTDINQP.

The GIY-YIG domain occupies 3 to 78; the sequence is DYHYVYIVEC…KSYTREKKQQ (76 aa).

Belongs to the UPF0213 family.

The polypeptide is UPF0213 protein HQ_3675A (Haloquadratum walsbyi (strain DSM 16790 / HBSQ001)).